Reading from the N-terminus, the 283-residue chain is Phospholipase C (283 aa).

An N-terminal signal peptide occupies residues 1 to 24 (MKKKVLALGAAITLVAPLQSVAFA). A propeptide spanning residues 25-38 (HENDGGQRFGVIPR) is cleaved from the precursor. Zn(2+)-binding residues include Trp39, His52, Asp93, His107, His156, Asp160, His166, His180, and Glu184. Residues 39–283 (WSAEDKHKEG…QLWFDTYGNR (245 aa)) enclose the Zn-dependent PLC domain.

It belongs to the bacterial zinc-metallophospholipase C family. In terms of assembly, monomer. Zn(2+) is required as a cofactor.

The catalysed reaction is a 1,2-diacyl-sn-glycero-3-phosphocholine + H2O = phosphocholine + a 1,2-diacyl-sn-glycerol + H(+). Its function is as follows. Required, with sphingomyelinase, to effect target cell lysis (hemolysis). This is Phospholipase C (cerA) from Bacillus cereus.